Reading from the N-terminus, the 368-residue chain is DNA replication and repair protein RecF (368 aa).

30–37 (GRNGSGKT) contacts ATP.

The protein belongs to the RecF family.

The protein resides in the cytoplasm. In terms of biological role, the RecF protein is involved in DNA metabolism; it is required for DNA replication and normal SOS inducibility. RecF binds preferentially to single-stranded, linear DNA. It also seems to bind ATP. This chain is DNA replication and repair protein RecF, found in Chlorobaculum parvum (strain DSM 263 / NCIMB 8327) (Chlorobium vibrioforme subsp. thiosulfatophilum).